A 333-amino-acid polypeptide reads, in one-letter code: MFRAAAPGQLRRAASSLRFQSTLVIAEHANDSLAPITLNTITAATRLGGEVSCLVAGTKCDKVAQDLCKVAGIAKVLVAQHDAYRGLLAEDLTPLILATQKQFNYTHICAGASAFGKNLLPRVAAKLEVAPISDIIAIKSPDTFVRTIYAGNALCTVKCDEKVKVFSVRGTSFEAAATSGGTASSEKASSTSPVEISEWLDQKLTKSDRPELTGAKVVVSGGRGLKSGENFKLLYDLADQLHAAVGASRAAVDAGFVPNDMQVGQTGKIVAPELYIAVGISGAIQHLAGMKDSKTIVAINKDPEAPIFQVADYGIVADLFKVVPEMTEILKKK.

The transit peptide at 1–19 (MFRAAAPGQLRRAASSLRF) directs the protein to the mitochondrion. The domain I stretch occupies residues 20–204 (QSTLVIAEHA…EISEWLDQKL (185 aa)). Lysine 59 is modified (N6-acetyllysine; alternate). Lysine 59 carries the N6-succinyllysine; alternate modification. At lysine 62 the chain carries N6-acetyllysine. Lysine 69 carries the post-translational modification N6-acetyllysine; alternate. N6-succinyllysine; alternate is present on lysine 69. Lysine 75 is subject to N6-acetyllysine. Threonine 93 bears the Phosphothreonine mark. N6-acetyllysine occurs at positions 101 and 139. Position 140 is a phosphoserine (serine 140). Position 158 is an N6-acetyllysine; alternate (lysine 158). Lysine 158 bears the N6-succinyllysine; alternate mark. Lysine 164 bears the N6-acetyllysine mark. An N6-succinyllysine modification is found at lysine 187. Position 203 is an N6-acetyllysine; alternate (lysine 203). Lysine 203 is subject to N6-succinyllysine; alternate. The interval 205–333 (TKSDRPELTG…PEMTEILKKK (129 aa)) is domain II. Position 216 is an N6-succinyllysine (lysine 216). FAD is bound at residue arginine 223. N6-acetyllysine; alternate occurs at positions 226 and 232. 2 positions are modified to N6-succinyllysine; alternate: lysine 226 and lysine 232. FAD contacts are provided by residues serine 248, 263–266 (VGQT), 281–286 (SGAIQH), and asparagine 300. Lysine 301 carries the post-translational modification N6-succinyllysine. Residue 318–319 (DL) participates in FAD binding.

Belongs to the ETF alpha-subunit/FixB family. As to quaternary structure, heterodimer composed of ETFA and ETFB. Identified in a complex that contains ETFA, ETFB and ETFRF1. Interaction with ETFRF1 promotes dissociation of the bound FAD and loss of electron transfer activity. Interacts with TASOR. FAD is required as a cofactor.

It localises to the mitochondrion matrix. Functionally, heterodimeric electron transfer flavoprotein that accepts electrons from several mitochondrial dehydrogenases, including acyl-CoA dehydrogenases, glutaryl-CoA and sarcosine dehydrogenase. It transfers the electrons to the main mitochondrial respiratory chain via ETF-ubiquinone oxidoreductase (ETF dehydrogenase). Required for normal mitochondrial fatty acid oxidation and normal amino acid metabolism. In Macaca fascicularis (Crab-eating macaque), this protein is Electron transfer flavoprotein subunit alpha, mitochondrial (ETFA).